A 504-amino-acid polypeptide reads, in one-letter code: Anaerobic nitric oxide reductase transcription regulator NorR (504 aa).

Asp-57 carries the post-translational modification 4-aspartylphosphate. The Sigma-54 factor interaction domain maps to 187–416; the sequence is MIGLSPGMTQ…LEHAIHRAVV (230 aa). ATP contacts are provided by residues 215–222 and 278–287; these read GETGTGKE and ADNGTLFLDE. Residues 479 to 498 constitute a DNA-binding region (H-T-H motif); it reads WAACARMLETDVANLHRLAK.

The protein operates within nitrogen metabolism; nitric oxide reduction. In terms of biological role, required for the expression of anaerobic nitric oxide (NO) reductase, acts as a transcriptional activator for at least the norVW operon. Activation also requires sigma-54. The sequence is that of Anaerobic nitric oxide reductase transcription regulator NorR from Escherichia coli O6:H1 (strain CFT073 / ATCC 700928 / UPEC).